Here is a 220-residue protein sequence, read N- to C-terminus: UPF0319 protein CKO_02102 (220 aa).

An N-terminal signal peptide occupies residues 1-20 (MKTGIITMLFVLYLPVTAFA).

This sequence belongs to the UPF0319 family.

The chain is UPF0319 protein CKO_02102 from Citrobacter koseri (strain ATCC BAA-895 / CDC 4225-83 / SGSC4696).